Here is a 342-residue protein sequence, read N- to C-terminus: Serine/threonine-protein kinase SAPK1 (342 aa).

Positions 4-260 (YEVMRDIGSG…IPEIKNHPWF (257 aa)) constitute a Protein kinase domain. Residues 10–18 (IGSGNFGVA) and K33 each bind ATP. Residue D123 is the Proton acceptor of the active site. The C-terminal stretch occupies residues 253–342 (EIKNHPWFLK…ENSGDFVCAL (90 aa)).

Belongs to the protein kinase superfamily. Ser/Thr protein kinase family. In terms of processing, phosphorylated. Expressed in leaf blades, leaf sheaths and roots. Expressed in shoots and roots of young seedlings.

The enzyme catalyses L-seryl-[protein] + ATP = O-phospho-L-seryl-[protein] + ADP + H(+). The catalysed reaction is L-threonyl-[protein] + ATP = O-phospho-L-threonyl-[protein] + ADP + H(+). Its activity is regulated as follows. Activated by phosphorylation in response to hyperosmotic stress within 5 minutes. May play a role in signal transduction of hyperosmotic response. The protein is Serine/threonine-protein kinase SAPK1 (SAPK1) of Oryza sativa subsp. japonica (Rice).